The primary structure comprises 207 residues: Coiled-coil domain-containing protein 124 homolog (207 aa).

A disordered region spans residues 1-90 (MGNPKKRAEK…KAAKKNSSLD (90 aa)). Positions 5 to 71 (KKRAEKAEAA…RLEKEEMESL (67 aa)) form a coiled coil. 2 stretches are compositionally biased toward basic and acidic residues: residues 9-28 (EKAEAAKSRKQDEEKKKKDA) and 41-65 (NKKEQEAEKRKAALERKAERERLEK).

This sequence belongs to the CCDC124 family. As to quaternary structure, associates with translationally inactive ribosomes in the nonrotated state.

It localises to the cytoplasm. The protein localises to the nucleus. Its function is as follows. Ribosome-binding protein involved in ribosome hibernation by associating with translationally inactive ribosomes. Required for translational recovery after starvation from stationary phase. May facilitate rapid translation reactivation by stabilizing the recycling-competent state of inactive ribosomes. The polypeptide is Coiled-coil domain-containing protein 124 homolog (Schizosaccharomyces pombe (strain 972 / ATCC 24843) (Fission yeast)).